The following is a 131-amino-acid chain: 14.7 kDa heat shock protein (131 aa).

Residues 1–11 (MSRNMEVNAGS) are compositionally biased toward polar residues. The interval 1 to 20 (MSRNMEVNAGSSGEIPSPIR) is disordered. Residues 22-131 (RFQKSGSQAV…INVKERILHY (110 aa)) form the sHSP domain.

This sequence belongs to the small heat shock protein (HSP20) family. In terms of assembly, may form oligomeric structures.

It is found in the cytoplasm. The chain is 14.7 kDa heat shock protein (HSP14.7) from Arabidopsis thaliana (Mouse-ear cress).